Reading from the N-terminus, the 193-residue chain is SCO1 protein homolog (193 aa).

A signal peptide spans 1–18 (MKVIKGLTAGLIFLFLCA). C19 carries N-palmitoyl cysteine lipidation. C19 carries S-diacylglycerol cysteine lipidation. Positions 26 to 191 (DPLNYEVEPF…IISDVKSAST (166 aa)) constitute a Thioredoxin domain. Cu cation contacts are provided by C64, C68, and H154.

The protein belongs to the SCO1/2 family. As to quaternary structure, monomer.

The protein resides in the cell membrane. Its function is as follows. Necessary for insertion of copper into the active site of cytochrome c oxidase. May play a role in copper homeostasis or redox signaling. The protein is SCO1 protein homolog (ypmQ) of Bacillus subtilis (strain 168).